The chain runs to 715 residues: Protein DENND6 homolog (715 aa).

Positions 13 to 58 form a coiled coil; the sequence is MIFKEEEIKKQQILLEKEEKEKQEQQQKKLNKDNIFKLEEEGKKLE. Residues 96-273 enclose the uDENN domain; that stretch reads NSFCIINFDL…VKQHQLGGGS (178 aa). Disordered regions lie at residues 269-296 and 392-416; these read LGGG…SNTT and SGTR…NNNN. The cDENN domain maps to 299–476; that stretch reads SPSIWSEMKL…KDLLTRHVLD (178 aa). Over residues 399 to 416 the composition is skewed to low complexity; that stretch reads SNNNNNQDDSEYNNNNNN. The 123-residue stretch at 478 to 600 folds into the dDENN domain; it reads KEKILSEYKP…KQWLDDKRAQ (123 aa).

It belongs to the DENND6 family.

The polypeptide is Protein DENND6 homolog (Dictyostelium discoideum (Social amoeba)).